The sequence spans 517 residues: Enantioselective amidase (517 aa).

Residues K96 and S173 each act as charge relay system in the active site. Residue S197 is the Acyl-ester intermediate of the active site.

Belongs to the amidase family. In terms of assembly, homooctamer.

The enzyme catalyses a monocarboxylic acid amide + H2O = a monocarboxylate + NH4(+). The sequence is that of Enantioselective amidase (amdA) from Rhodococcus rhodochrous.